Reading from the N-terminus, the 360-residue chain is D-alanine--D-alanine ligase (360 aa).

The 207-residue stretch at 146–352 (KLCVADAGIA…YRNLITRLLE (207 aa)) folds into the ATP-grasp domain. Residue 179–234 (EAQVSYPLFVKPASLGSSIGISKVHNREELHPALQAACALDWKVVVESTVKGREIE) participates in ATP binding. Positions 305, 319, and 321 each coordinate Mg(2+).

This sequence belongs to the D-alanine--D-alanine ligase family. Mg(2+) is required as a cofactor. Requires Mn(2+) as cofactor.

The protein localises to the cytoplasm. It catalyses the reaction 2 D-alanine + ATP = D-alanyl-D-alanine + ADP + phosphate + H(+). It functions in the pathway cell wall biogenesis; peptidoglycan biosynthesis. Functionally, cell wall formation. This is D-alanine--D-alanine ligase from Chlorobium chlorochromatii (strain CaD3).